Reading from the N-terminus, the 383-residue chain is Acetylornithine deacetylase (383 aa).

Position 80 (His80) interacts with Zn(2+). Residue Asp82 is part of the active site. Residue Asp112 participates in Zn(2+) binding. Glu144 is an active-site residue. The Zn(2+) site is built by Glu145, Glu169, and His355.

Belongs to the peptidase M20A family. ArgE subfamily. In terms of assembly, homodimer. It depends on Zn(2+) as a cofactor. Requires Co(2+) as cofactor. Glutathione is required as a cofactor.

The protein localises to the cytoplasm. The enzyme catalyses N(2)-acetyl-L-ornithine + H2O = L-ornithine + acetate. The protein operates within amino-acid biosynthesis; L-arginine biosynthesis; L-ornithine from N(2)-acetyl-L-ornithine (linear): step 1/1. Catalyzes the hydrolysis of the amide bond of N(2)-acetylated L-amino acids. Cleaves the acetyl group from N-acetyl-L-ornithine to form L-ornithine, an intermediate in L-arginine biosynthesis pathway, and a branchpoint in the synthesis of polyamines. This is Acetylornithine deacetylase from Shigella sonnei (strain Ss046).